Here is a 266-residue protein sequence, read N- to C-terminus: Vitamin B12-binding protein (266 aa).

Residues M1–A22 form the signal peptide. Residues R25–N266 enclose the Fe/B12 periplasmic-binding domain. Residues Y50 and D242–R246 contribute to the cyanocob(III)alamin site. Residues C183 and C259 are joined by a disulfide bond.

Belongs to the BtuF family. In terms of assembly, the complex is composed of two ATP-binding proteins (BtuD), two transmembrane proteins (BtuC) and a solute-binding protein (BtuF).

The protein localises to the periplasm. Part of the ABC transporter complex BtuCDF involved in vitamin B12 import. Binds vitamin B12 and delivers it to the periplasmic surface of BtuC. The chain is Vitamin B12-binding protein from Salmonella typhi.